Consider the following 31-residue polypeptide: TCLEIGEFCGKPMMVGSLCCSPGWCFFICVG.

3 disulfide bridges follow: cysteine 2–cysteine 20, cysteine 9–cysteine 25, and cysteine 19–cysteine 29.

This sequence belongs to the conotoxin O1 superfamily. In terms of tissue distribution, expressed by the venom duct.

The protein localises to the secreted. The polypeptide is Conotoxin pc6b (Conus pictus (Cone snail)).